We begin with the raw amino-acid sequence, 238 residues long: Pyridoxine 5'-phosphate synthase (238 aa).

Asparagine 9 serves as a coordination point for 3-amino-2-oxopropyl phosphate. Position 11–12 (11–12) interacts with 1-deoxy-D-xylulose 5-phosphate; it reads DH. Arginine 20 lines the 3-amino-2-oxopropyl phosphate pocket. The active-site Proton acceptor is histidine 45. Arginine 47 and histidine 52 together coordinate 1-deoxy-D-xylulose 5-phosphate. Glutamate 72 functions as the Proton acceptor in the catalytic mechanism. Residue threonine 102 coordinates 1-deoxy-D-xylulose 5-phosphate. Histidine 189 serves as the catalytic Proton donor. Residues glycine 190 and 211-212 contribute to the 3-amino-2-oxopropyl phosphate site; that span reads GH.

It belongs to the PNP synthase family. In terms of assembly, homooctamer; tetramer of dimers.

It localises to the cytoplasm. The enzyme catalyses 3-amino-2-oxopropyl phosphate + 1-deoxy-D-xylulose 5-phosphate = pyridoxine 5'-phosphate + phosphate + 2 H2O + H(+). Its pathway is cofactor biosynthesis; pyridoxine 5'-phosphate biosynthesis; pyridoxine 5'-phosphate from D-erythrose 4-phosphate: step 5/5. Catalyzes the complicated ring closure reaction between the two acyclic compounds 1-deoxy-D-xylulose-5-phosphate (DXP) and 3-amino-2-oxopropyl phosphate (1-amino-acetone-3-phosphate or AAP) to form pyridoxine 5'-phosphate (PNP) and inorganic phosphate. This chain is Pyridoxine 5'-phosphate synthase, found in Ehrlichia ruminantium (strain Gardel).